Reading from the N-terminus, the 1074-residue chain is MDDDDDSCLLDLIGDPQALNYFLHGPSSKSGSDDVTNAGYSAANSNSIFANSTNADPKSALKGVSDQLGEGPSDGLPLASSLQFLEDELESSPLPDLSEDQPFDILQKSLQEANITEQTLAEEAYLDASIGSSQQFAQAQLHPSSSASFTQASNVSNYSGQTLQPIGVTHVPVGASFASNTVGVQHGFMQHVGISVPSQHLPNSSQISGSGQIQLIGSFGNQPSMMTINNLDGSQIILKGSGQQAPSNVSGGLLVHRQTPNGNSLFGNSTSSPVAQPVTVPFNSTNFQASLPVHNIIIQRGLAPNSNKVPINIQPKPVQMGQQSAYNVNNLGIQQHHAQQGISFAPTSSPQGSVVGPHMSVNIVNQQNTRKPVTSQAVSGTGGSIVIHSPMGQPHTPQSQFLIPTSLSVSSNSVHHVQAINGQLLQTQPSQLISGQVASEHVMLNRNSSNMLRTNQPYSGQMLNNQNTAVQLVSGQTFATSGSPVIVNHASPQIVGGQMPLQQASPTVLHLSPGQSSVSQGRPGFATMPAVSGMAGPARFPAVSSASTAHPTLGPTVQSGAPGSNFTGDQLTQANRTPAPVSVSHRLPVSASKSPSTLSNTPGTQQQFFCQAQKKCLNQTSPIPTSKTTDGLRPSQIPGLLSTALPGQDSGSKIMPATLGATQAQPESSVGSSPSQTAVQVDSHPGQKRPAAKQLTKGAFILQQLQRDQAHAVTPDKSQFRSLNDTVQRLLSYHVCQGSMPTEEDLRQVDNEFEEVATQLLKRTQAMLNKYRFLLLEDAMRINPSAEMVMIDRMFNQEERASLSRDKRLALVDPEGFQADFCCSFKLDEAVPETPLDRSDQHRSKTSSLHQVPRAQSRDRAKPGMAEATNHDQFHLVPNHIVVSAEGNISKKSEGHSRTLKFDRGVLGQYRGPPEDKGGRRDPAKVSRCSPGPEGHRKSLPRPDHGSESKLPGVLASSHMEMPCLDSFQDKALRNSPKNEVLHTDIMKGSGEPQPDLQLTKSLEKTFKNILELKNSGRPPSDPTASGAADLDFPSFSPMASQENCLEKFIPDHSEGVVETDSILEAAVNSILEC.

Disordered regions lie at residues 542 to 603, 620 to 689, 834 to 874, and 887 to 952; these read AVSS…NTPG, TSPI…GQKR, TPLD…HDQF, and GNIS…SKLP. Composition is skewed to polar residues over residues 544–576, 591–603, 620–629, and 660–680; these read SSAS…QANR, ASKS…NTPG, TSPIPTSKTT, and GATQ…TAVQ. S621 carries the phosphoserine modification. Basic and acidic residues-rich tracts occupy residues 889–904, 913–925, and 934–948; these read ISKK…KFDR, PPED…DPAK, and EGHR…HGSE. S976 bears the Phosphoserine mark.

As to quaternary structure, component of the multiprotein chromatin-remodeling complexes SWI/SNF: SWI/SNF-A (BAF), SWI/SNF-B (PBAF) and related complexes. The canonical complex contains a catalytic subunit (either SMARCA4/BRG1/BAF190A or SMARCA2/BRM/BAF190B) and at least SMARCE1, ACTL6A/BAF53, SMARCC1/BAF155, SMARCC2/BAF170, and SMARCB1/SNF5/BAF47. Other subunits specific to each of the complexes may also be present permitting several possible combinations developmentally and tissue specific. Component of the SWI/SNF (GBAF) subcomplex, which includes at least BICRA or BICRAL (mutually exclusive), BRD9, SS18, the core BAF subunits, SMARCA2/BRM, SMARCA4/BRG1/BAF190A, ACTL6A/BAF53, SMARCC1/BAF155, and SMARCD1/BAF60A.

Its function is as follows. Component of SWI/SNF chromatin remodeling subcomplex GBAF that carries out key enzymatic activities, changing chromatin structure by altering DNA-histone contacts within a nucleosome in an ATP-dependent manner. The polypeptide is BRD4-interacting chromatin-remodeling complex-associated protein-like (Mus musculus (Mouse)).